The following is a 1874-amino-acid chain: Protein TIC 214 (1874 aa).

The next 6 helical transmembrane spans lie at 18–38 (IINS…FSIG), 64–84 (FITG…HLAL), 87–107 (PHTI…WNNH), 124–144 (LSIQ…YFIL), 172–192 (VGWL…LVWI), and 221–241 (IFSI…PSPI). Disordered stretches follow at residues 248–310 (ETSK…EIRV) and 1567–1624 (KTEC…NEED). Residues 255 to 268 (GVESEEEGDVEIET) show a composition bias toward acidic residues. Basic and acidic residues-rich tracts occupy residues 298 to 310 (DSNK…EIRV) and 1584 to 1601 (NQKE…RSDA).

Belongs to the TIC214 family. Part of the Tic complex.

The protein localises to the plastid. Its subcellular location is the chloroplast inner membrane. In terms of biological role, involved in protein precursor import into chloroplasts. May be part of an intermediate translocation complex acting as a protein-conducting channel at the inner envelope. This Coffea arabica (Arabian coffee) protein is Protein TIC 214.